Here is a 519-residue protein sequence, read N- to C-terminus: RxLR effector protein PITG_15278 (519 aa).

The N-terminal stretch at 1–24 is a signal peptide; that stretch reads MHFIYRVVLVLAAFALFKVDSISA. A RxLR-dEER motif is present at residues 49-59; the sequence is RQLRVMDDNER.

Belongs to the RxLR effector family.

The protein localises to the secreted. The protein resides in the host cytoplasm. In terms of biological role, effector that enhances P.infestans colonization of Nicotiana benthamiana leaves. The chain is RxLR effector protein PITG_15278 from Phytophthora infestans (strain T30-4) (Potato late blight agent).